Reading from the N-terminus, the 516-residue chain is 2-isopropylmalate synthase (516 aa).

Residues 5 to 267 (VIIFDTTLRD…STNIVHKEIY (263 aa)) form the Pyruvate carboxyltransferase domain. D14, H202, H204, and N238 together coordinate Mn(2+). The tract at residues 392–516 (YLKFFSVQSI…NKKLKNLKKY (125 aa)) is regulatory domain.

It belongs to the alpha-IPM synthase/homocitrate synthase family. LeuA type 1 subfamily. As to quaternary structure, homodimer. Mn(2+) is required as a cofactor.

The protein localises to the cytoplasm. The catalysed reaction is 3-methyl-2-oxobutanoate + acetyl-CoA + H2O = (2S)-2-isopropylmalate + CoA + H(+). It functions in the pathway amino-acid biosynthesis; L-leucine biosynthesis; L-leucine from 3-methyl-2-oxobutanoate: step 1/4. Its function is as follows. Catalyzes the condensation of the acetyl group of acetyl-CoA with 3-methyl-2-oxobutanoate (2-ketoisovalerate) to form 3-carboxy-3-hydroxy-4-methylpentanoate (2-isopropylmalate). The sequence is that of 2-isopropylmalate synthase from Buchnera aphidicola subsp. Diuraphis noxia.